We begin with the raw amino-acid sequence, 262 residues long: Phosphate import ATP-binding protein PstB 2 (262 aa).

Residues F18–I257 enclose the ABC transporter domain. Residue G50–S57 coordinates ATP.

It belongs to the ABC transporter superfamily. Phosphate importer (TC 3.A.1.7) family. The complex is composed of two ATP-binding proteins (PstB), two transmembrane proteins (PstC and PstA) and a solute-binding protein (PstS).

Its subcellular location is the cell membrane. It carries out the reaction phosphate(out) + ATP + H2O = ADP + 2 phosphate(in) + H(+). Functionally, part of the ABC transporter complex PstSACB involved in phosphate import. Responsible for energy coupling to the transport system. The sequence is that of Phosphate import ATP-binding protein PstB 2 from Symbiobacterium thermophilum (strain DSM 24528 / JCM 14929 / IAM 14863 / T).